A 109-amino-acid chain; its full sequence is Iron-sulfur cluster assembly protein CyaY (109 aa).

Belongs to the frataxin family.

Involved in iron-sulfur (Fe-S) cluster assembly. May act as a regulator of Fe-S biogenesis. This is Iron-sulfur cluster assembly protein CyaY from Verminephrobacter eiseniae (strain EF01-2).